A 452-amino-acid polypeptide reads, in one-letter code: Putative purine permease CPE0397 (452 aa).

12 helical membrane passes run 34-54 (IFAAFGGIIVVPLVIATSLGF), 58-78 (VTTALISASILGSGLATIIQA), 83-103 (KVGARVACIMGTDFTFVSPAI), 108-128 (VLGLPGIIGATILGSLFEVIL), 138-158 (FFPPLVTGTVVALIGLTLLPV), 172-192 (YASLENLAVAMFVLVITLLLN), 201-221 (SASILIGIVVGYIVCIPLGLV), 250-270 (MAFIPAYFVATIGTVGCLKAI), 326-346 (AVMAGILLVILGFLPKVAAII), 348-368 (GIPNPVLGGVGIMMFGTVAAA), 383-403 (LLIIAISMGLGLGVTFRPDVI), and 412-432 (MIFSSGISTGTIAALILNAVL).

It belongs to the nucleobase:cation symporter-2 (NCS2) (TC 2.A.40) family.

The protein localises to the cell membrane. The polypeptide is Putative purine permease CPE0397 (cpx) (Clostridium perfringens (strain 13 / Type A)).